A 319-amino-acid chain; its full sequence is Aliphatic sulfonates import ATP-binding protein SsuB (319 aa).

An ABC transporter domain is found at 63 to 282; sequence VTLSGVSKRF…ARASAAFAAL (220 aa). 95–102 serves as a coordination point for ATP; sequence GRSGCGKS.

It belongs to the ABC transporter superfamily. Aliphatic sulfonates importer (TC 3.A.1.17.2) family. The complex is composed of two ATP-binding proteins (SsuB), two transmembrane proteins (SsuC) and a solute-binding protein (SsuA).

It localises to the cell inner membrane. The enzyme catalyses ATP + H2O + aliphatic sulfonate-[sulfonate-binding protein]Side 1 = ADP + phosphate + aliphatic sulfonateSide 2 + [sulfonate-binding protein]Side 1.. Part of the ABC transporter complex SsuABC involved in aliphatic sulfonates import. Responsible for energy coupling to the transport system. The protein is Aliphatic sulfonates import ATP-binding protein SsuB of Burkholderia ambifaria (strain ATCC BAA-244 / DSM 16087 / CCUG 44356 / LMG 19182 / AMMD) (Burkholderia cepacia (strain AMMD)).